Here is a 2594-residue protein sequence, read N- to C-terminus: Protein sevenless (2594 aa).

Disordered regions lie at residues 1 to 34 (MFWR…PKRL) and 49 to 92 (KMST…RVRR). Topologically, residues 1–2141 (MFWREDAAQQ…FVSPEKRGSL (2141 aa)) are extracellular. Positions 9–26 (QQQQQQQQQQQQQQQQQQ) are enriched in low complexity. N-linked (GlcNAc...) asparagine glycans are attached at residues asparagine 77, asparagine 401, asparagine 508, asparagine 532, asparagine 641, asparagine 667, asparagine 778, asparagine 797, asparagine 874, and asparagine 980. 2 Fibronectin type-III domains span residues 358–462 (ETTQ…TPME) and 468–560 (APII…SPLE). A Fibronectin type-III 3 domain is found at 838-938 (PPAPRELRAL…APLATRTWPL (101 aa)). The LDL-receptor class B repeat unit spans residues 1024-1066 (GLLYWTDLARDCVQRLDPFSGERELLPIFGARHLALDSAQGHL). Fibronectin type-III domains are found at residues 1227–1317 (LAVP…QLDT) and 1324–1430 (QPRR…VQSV). N-linked (GlcNAc...) asparagine glycosylation is found at asparagine 1257, asparagine 1344, asparagine 1382, asparagine 1577, asparagine 1587, asparagine 1665, asparagine 1752, asparagine 1776, asparagine 1824, asparagine 1908, asparagine 1966, and asparagine 2088. 4 Fibronectin type-III domains span residues 1711 to 1814 (TAAA…TLHT), 1821 to 1920 (APRN…SYAP), 1922 to 2010 (PPLQ…TLGD), and 2014 to 2132 (APGR…AEPF). Residues 2142–2162 (VLAIIAPAAIVSSCVLALVLV) form a helical membrane-spanning segment. Residues 2163–2594 (RKLQKRRHRA…LYANEGISGL (432 aa)) lie on the Cytoplasmic side of the membrane. Residues 2224–2495 (LTLLRFLGSG…KRCLSTLQAL (272 aa)) enclose the Protein kinase domain. Residues 2230 to 2238 (LGSGAFGEV) and lysine 2257 each bind ATP. Aspartate 2355 acts as the Proton acceptor in catalysis. Tyrosine 2391 carries the phosphotyrosine; by autocatalysis modification. The tract at residues 2543 to 2568 (TVSTTDADTTGSPTTPTAPTTPTTTT) is disordered. The span at 2545–2568 (STTDADTTGSPTTPTAPTTPTTTT) shows a compositional bias: low complexity.

Belongs to the protein kinase superfamily. Tyr protein kinase family. Insulin receptor subfamily.

It is found in the cell membrane. The catalysed reaction is L-tyrosyl-[protein] + ATP = O-phospho-L-tyrosyl-[protein] + ADP + H(+). Functionally, receptor for an extracellular signal required to instruct a cell to differentiate into a R7 photoreceptor. The ligand for Sev is the Boss (Bride of Sevenless) protein. This chain is Protein sevenless (sev), found in Drosophila virilis (Fruit fly).